A 494-amino-acid polypeptide reads, in one-letter code: Arp2/3 complex-activating protein rickA (494 aa).

Residues 312–494 (PLENNIPPPP…RNSQKPSFVR (183 aa)) form a disordered region. The segment covering 317–357 (IPPPPPPPPPLPDNNIPPPPPPPPPLPDNNIPPPPPPPPMA) has biased composition (pro residues). Residues 383-400 (DTSDLMREIAGPKKLKKV) form the WH2 domain. Residues 421–454 (VNKPSGLESIFARRVAIEMSDSSSSESDSGNWSD) are central and acidic domains. Residues 440-456 (SDSSSSESDSGNWSDVS) are compositionally biased toward low complexity. Polar residues predominate over residues 477–494 (THAQKINNRNSQKPSFVR).

Its subcellular location is the cell surface. Its function is as follows. Recruits and activates the Arp2/3 complex, which in turn leads to actin polymerization, promoting Rickettsia motility during infection. This Rickettsia rickettsii protein is Arp2/3 complex-activating protein rickA (rickA).